Here is a 130-residue protein sequence, read N- to C-terminus: General stress protein 13 (130 aa).

Residues 8-77 form the S1 motif domain; sequence GSVYTGKVTG…EKGKISLSIR (70 aa). The tract at residues 76 to 109 is disordered; that stretch reads IRATQAAPEKKESKPRKPKAAQVSEEASTPQGFN. The segment covering 100–109 has biased composition (polar residues); sequence EEASTPQGFN.

As to quaternary structure, found in association with the 30S subunit of the ribosome.

Its subcellular location is the cytoplasm. The chain is General stress protein 13 (yugI) from Bacillus subtilis (strain 168).